A 777-amino-acid chain; its full sequence is Cyclin-F (777 aa).

The Nuclear localization signal 1 signature appears at 20–28 (KRRIKRRPR). The F-box domain occupies 29–76 (NLTILSLPEDVLFHILKWLSVGDILAVRAVHSHLKYLVDNHASVWASA). The 118-residue stretch at 288-405 (QASQAVNKQQ…EIISALEGKI (118 aa)) folds into the Cyclin N-terminal domain. 3 consecutive short sequence motifs (d box) follow at residues 310-313 (RYIL), 343-346 (RRRL), and 349-352 (RYKL). Disordered regions lie at residues 544–591 (QESP…TPTA) and 651–777 (QESS…HLAS). The Nuclear localization signal 2 motif lies at 568–574 (RRSKRKR). Residues 582–761 (RGSFVTTPTA…ESGVHQQPVK (180 aa)) are PEST. Low complexity-rich tracts occupy residues 695–708 (SGYSSVSSSSPISS) and 719–731 (STSVLSVGSHSST). A compositionally biased stretch (polar residues) spans 751–767 (PESGVHQQPVKRQNLSV). The short motif at 762–765 (RQNL) is the D box 4 element. A compositionally biased stretch (basic and acidic residues) spans 768–777 (HSDKDMHLAS).

It belongs to the cyclin family. Cyclin AB subfamily. Component of the SCF(CCNF) complex consisting of CUL1, RBX1, SKP1 and CCNF. Interacts with SKP1. Interacts with CUL1. Interacts with CCNB1; interaction is required for nuclear localization of CCNB1. Interacts with CCP110; this interaction leads to CCP110 ubiquitination and degradation via the proteasome pathway. Interacts (via the Cyclin N-terminal domain) with MYBL2/BMYB. Interacts with FZR1/CDH1 (via N-terminus). Interacts with RRM2 (via Cy motif and when phosphorylated at 'Thr-33'); the interaction occurs exclusively in G2 and early M. Interacts with CDC6 (via Cy motif); the interaction takes place during G2 and M phase. Post-translationally, degraded when the spindle assembly checkpoint is activated during the G2-M transition. Degradation is not dependent on the proteasome or ubiquitin and depends on the C-terminal PEST sequence. Phosphorylated just before cells enter into mitosis. In terms of processing, ubiquitinated by the anaphase-promoting complex (APC/C); leading to its degradation by the proteasome.

It localises to the nucleus. The protein resides in the cytoplasm. It is found in the perinuclear region. The protein localises to the cytoskeleton. Its subcellular location is the microtubule organizing center. It localises to the centrosome. The protein resides in the centriole. Substrate recognition component of a SCF (SKP1-CUL1-F-box protein) E3 ubiquitin-protein ligase complex which mediates the ubiquitination and subsequent proteasomal degradation of target proteins. The SCF(CCNF) E3 ubiquitin-protein ligase complex is an integral component of the ubiquitin proteasome system (UPS) and links proteasome degradation to the cell cycle. Mediates the substrate recognition and the proteasomal degradation of various target proteins involved in the regulation of cell cycle progression and in the maintenance of genome stability. Mediates the ubiquitination and subsequent proteasomal degradation of CP110 during G2 phase, thereby acting as an inhibitor of centrosome reduplication. In G2, mediates the ubiquitination and proteasomal degradation of CDC6, thereby suppressing DNA re-replication and preventing genome instability. Involved in the ubiquitination and degradation of the substrate adapter CDH1 of the anaphase-promoting complex (APC/C), thereby acting as an antagonist of APC/C in regulating G1 progression and S phase entry. May play a role in the G2 cell cycle checkpoint control after DNA damage, possibly by promoting the ubiquitination of MYBL2/BMYB. The polypeptide is Cyclin-F (Ccnf) (Mus musculus (Mouse)).